Reading from the N-terminus, the 171-residue chain is Phosphopantetheine adenylyltransferase (171 aa).

Substrate is bound at residue threonine 9. Residues 9–10 (TF) and histidine 17 contribute to the ATP site. Substrate-binding residues include lysine 41, leucine 78, and arginine 92. ATP is bound by residues 93–95 (GLR), glutamate 103, and 128–134 (HQAIASK).

Belongs to the bacterial CoaD family. Homohexamer. Requires Mg(2+) as cofactor.

It is found in the cytoplasm. The enzyme catalyses (R)-4'-phosphopantetheine + ATP + H(+) = 3'-dephospho-CoA + diphosphate. The protein operates within cofactor biosynthesis; coenzyme A biosynthesis; CoA from (R)-pantothenate: step 4/5. Its function is as follows. Reversibly transfers an adenylyl group from ATP to 4'-phosphopantetheine, yielding dephospho-CoA (dPCoA) and pyrophosphate. The protein is Phosphopantetheine adenylyltransferase of Dinoroseobacter shibae (strain DSM 16493 / NCIMB 14021 / DFL 12).